The chain runs to 499 residues: NADH-quinone oxidoreductase subunit 14 (499 aa).

14 consecutive transmembrane segments (helical) span residues 9 to 29, 37 to 57, 76 to 96, 104 to 124, 126 to 146, 161 to 181, 196 to 216, 235 to 255, 269 to 289, 301 to 321, 324 to 344, 369 to 389, 402 to 422, and 446 to 466; these read ILPE…GAYL, TLLW…GLGN, FAKV…ADYM, FEFP…VSAG, LLTL…VAAM, FVLG…VYGF, AGHL…GLSF, PTPV…ALIA, WSQI…IAGI, SSIA…AIGV, MLLY…FILS, ALAM…LGFF, GMGW…FYYL, and YLAL…MFGV.

Belongs to the complex I subunit 2 family. NDH-1 is composed of at least 14 different subunits, Nqo1 to Nqo14. The complex has a L-shaped structure, with the hydrophobic arm (subunits Nqo7, Nqo8, Nqo10 to Nqo14) embedded in the inner membrane and the hydrophilic peripheral arm (subunits Nqo1 to Nqo6, Nqo9) protruding into the bacterial cytoplasm. The hydrophilic domain contains all the redox centers.

Its subcellular location is the cell inner membrane. It catalyses the reaction a quinone + NADH + 5 H(+)(in) = a quinol + NAD(+) + 4 H(+)(out). Functionally, NDH-1 shuttles electrons from NADH, via FMN and iron-sulfur (Fe-S) centers, to quinones in the respiratory chain. The immediate electron acceptor for the enzyme in this species is believed to be ubiquinone. Couples the redox reaction to proton translocation (for every two electrons transferred, four hydrogen ions are translocated across the cytoplasmic membrane), and thus conserves the redox energy in a proton gradient. In Paracoccus denitrificans, this protein is NADH-quinone oxidoreductase subunit 14.